The chain runs to 140 residues: Sex-regulated protein janus-B (140 aa).

R42 serves as a coordination point for substrate. H69 (proton acceptor) is an active-site residue. 110–112 (SRT) provides a ligand contact to substrate.

Belongs to the janus family.

In terms of biological role, janA and janB regulate somatic sex differentiation. The chain is Sex-regulated protein janus-B (janB) from Drosophila orena (Fruit fly).